The sequence spans 302 residues: Alpha-ketoglutarate-dependent dioxygenase alkB homolog 4 (302 aa).

An N-acetylalanine modification is found at A2. A Phosphothreonine modification is found at T8. The 125-residue stretch at 150–274 (PVEQCNLDYC…RVCVTFRELS (125 aa)) folds into the Fe2OG dioxygenase domain. Fe cation is bound by residues H169, D171, and H254. A 2-oxoglutarate-binding site is contributed by R265.

Belongs to the alkB family. Interacts with ZFHX3, MLLT3, MLLT1, HSF4, EP300, TES, EIF3C, MTMR6 and PSMA6. Fe(2+) is required as a cofactor. As to expression, widely expressed, with highest expression in pancreas, ovary and spleen.

The protein resides in the cytoplasm. It is found in the nucleus. It localises to the nucleolus. The protein localises to the midbody. The catalysed reaction is an N(6)-methyl-2'-deoxyadenosine in DNA + 2-oxoglutarate + O2 = a 2'-deoxyadenosine in DNA + formaldehyde + succinate + CO2. It carries out the reaction N(6)-methyl-L-lysyl-[protein] + 2-oxoglutarate + O2 = L-lysyl-[protein] + formaldehyde + succinate + CO2. In terms of biological role, dioxygenase that mediates demethylation of actin monomethylated at 'Lys-84' (K84me1), thereby acting as a regulator of actomyosin-processes. Demethylation of actin K84me1 is required for maintaining actomyosin dynamics supporting normal cleavage furrow ingression during cytokinesis and cell migration. In addition to proteins, also demethylates DNA: specifically demethylates DNA methylated on the 6th position of adenine (N(6)-methyladenosine) DNA, thereby regulating Polycomb silencing. The sequence is that of Alpha-ketoglutarate-dependent dioxygenase alkB homolog 4 from Homo sapiens (Human).